A 136-amino-acid chain; its full sequence is 5-hydroxyisourate hydrolase (136 aa).

A signal peptide spans 1 to 20 (MKRYILATAIASLVAAPAMA). Substrate contacts are provided by His31, Arg69, and Tyr133.

The protein belongs to the transthyretin family. 5-hydroxyisourate hydrolase subfamily. As to quaternary structure, homotetramer.

The protein resides in the periplasm. It carries out the reaction 5-hydroxyisourate + H2O = 5-hydroxy-2-oxo-4-ureido-2,5-dihydro-1H-imidazole-5-carboxylate + H(+). Functionally, catalyzes the hydrolysis of 5-hydroxyisourate (HIU) to 2-oxo-4-hydroxy-4-carboxy-5-ureidoimidazoline (OHCU). The polypeptide is 5-hydroxyisourate hydrolase (hiuH) (Salmonella typhi).